We begin with the raw amino-acid sequence, 134 residues long: Large ribosomal subunit protein uL16c (134 aa).

It belongs to the universal ribosomal protein uL16 family. In terms of assembly, part of the 50S ribosomal subunit.

Its subcellular location is the plastid. The protein localises to the chloroplast. This chain is Large ribosomal subunit protein uL16c, found in Atropa belladonna (Belladonna).